The sequence spans 626 residues: Putative folylpolyglutamate synthase (626 aa).

144–147 (GKGS) lines the ATP pocket. Mg(2+) contacts are provided by serine 168, glutamate 235, and histidine 263. ATP is bound by residues arginine 412 and aspartate 430.

The protein belongs to the folylpolyglutamate synthase family.

The catalysed reaction is (6S)-5,6,7,8-tetrahydrofolyl-(gamma-L-Glu)(n) + L-glutamate + ATP = (6S)-5,6,7,8-tetrahydrofolyl-(gamma-L-Glu)(n+1) + ADP + phosphate + H(+). It functions in the pathway cofactor biosynthesis; tetrahydrofolylpolyglutamate biosynthesis. Its function is as follows. Conversion of folates to polyglutamate derivatives. This chain is Putative folylpolyglutamate synthase (folC), found in Dictyostelium discoideum (Social amoeba).